Reading from the N-terminus, the 874-residue chain is DNA mismatch repair protein MutS (874 aa).

Position 630 to 637 (630 to 637) interacts with ATP; that stretch reads GPNMAGKS.

Belongs to the DNA mismatch repair MutS family.

In terms of biological role, this protein is involved in the repair of mismatches in DNA. It is possible that it carries out the mismatch recognition step. This protein has a weak ATPase activity. The protein is DNA mismatch repair protein MutS of Chlorobium phaeovibrioides (strain DSM 265 / 1930) (Prosthecochloris vibrioformis (strain DSM 265)).